The sequence spans 419 residues: Glutamyl-tRNA reductase (419 aa).

Residues T49–R52, S107, E112–Q114, and Q118 each bind substrate. The active-site Nucleophile is the C50. G187 to I192 contacts NADP(+).

Belongs to the glutamyl-tRNA reductase family. As to quaternary structure, homodimer.

It carries out the reaction (S)-4-amino-5-oxopentanoate + tRNA(Glu) + NADP(+) = L-glutamyl-tRNA(Glu) + NADPH + H(+). The protein operates within porphyrin-containing compound metabolism; protoporphyrin-IX biosynthesis; 5-aminolevulinate from L-glutamyl-tRNA(Glu): step 1/2. Its function is as follows. Catalyzes the NADPH-dependent reduction of glutamyl-tRNA(Glu) to glutamate 1-semialdehyde (GSA). This chain is Glutamyl-tRNA reductase, found in Vibrio vulnificus (strain CMCP6).